The chain runs to 92 residues: Large ribosomal subunit protein bL27 (92 aa).

The tract at residues 1–21 (MSKKKGVGSSRNGRDSESKRL) is disordered. Over residues 12–21 (NGRDSESKRL) the composition is skewed to basic and acidic residues.

The protein belongs to the bacterial ribosomal protein bL27 family.

The protein is Large ribosomal subunit protein bL27 of Halothermothrix orenii (strain H 168 / OCM 544 / DSM 9562).